We begin with the raw amino-acid sequence, 155 residues long: 6,7-dimethyl-8-ribityllumazine synthase (155 aa).

5-amino-6-(D-ribitylamino)uracil contacts are provided by residues Phe-22, 56–58 (AFE), and 80–82 (AVI). Residue 85 to 86 (NT) participates in (2S)-2-hydroxy-3-oxobutyl phosphate binding. The Proton donor role is filled by His-88. Residue Phe-113 coordinates 5-amino-6-(D-ribitylamino)uracil. (2S)-2-hydroxy-3-oxobutyl phosphate is bound at residue Arg-127.

Belongs to the DMRL synthase family.

It catalyses the reaction (2S)-2-hydroxy-3-oxobutyl phosphate + 5-amino-6-(D-ribitylamino)uracil = 6,7-dimethyl-8-(1-D-ribityl)lumazine + phosphate + 2 H2O + H(+). The protein operates within cofactor biosynthesis; riboflavin biosynthesis; riboflavin from 2-hydroxy-3-oxobutyl phosphate and 5-amino-6-(D-ribitylamino)uracil: step 1/2. Its function is as follows. Catalyzes the formation of 6,7-dimethyl-8-ribityllumazine by condensation of 5-amino-6-(D-ribitylamino)uracil with 3,4-dihydroxy-2-butanone 4-phosphate. This is the penultimate step in the biosynthesis of riboflavin. This Streptococcus pneumoniae serotype 2 (strain D39 / NCTC 7466) protein is 6,7-dimethyl-8-ribityllumazine synthase.